Here is a 617-residue protein sequence, read N- to C-terminus: 1-deoxy-D-xylulose-5-phosphate synthase (617 aa).

Thiamine diphosphate is bound by residues histidine 76 and 117–119 (GHS). Aspartate 148 serves as a coordination point for Mg(2+). Residues 149–150 (GA), asparagine 177, tyrosine 285, and glutamate 366 contribute to the thiamine diphosphate site. Mg(2+) is bound at residue asparagine 177.

The protein belongs to the transketolase family. DXPS subfamily. Homodimer. It depends on Mg(2+) as a cofactor. Thiamine diphosphate serves as cofactor.

The enzyme catalyses D-glyceraldehyde 3-phosphate + pyruvate + H(+) = 1-deoxy-D-xylulose 5-phosphate + CO2. Its pathway is metabolic intermediate biosynthesis; 1-deoxy-D-xylulose 5-phosphate biosynthesis; 1-deoxy-D-xylulose 5-phosphate from D-glyceraldehyde 3-phosphate and pyruvate: step 1/1. Its function is as follows. Catalyzes the acyloin condensation reaction between C atoms 2 and 3 of pyruvate and glyceraldehyde 3-phosphate to yield 1-deoxy-D-xylulose-5-phosphate (DXP). This is 1-deoxy-D-xylulose-5-phosphate synthase from Histophilus somni (strain 129Pt) (Haemophilus somnus).